The sequence spans 101 residues: A-type ATP synthase subunit F (101 aa).

The protein belongs to the V-ATPase F subunit family. Has multiple subunits with at least A(3), B(3), C, D, E, F, H, I and proteolipid K(x).

It localises to the cell membrane. Its function is as follows. Component of the A-type ATP synthase that produces ATP from ADP in the presence of a proton gradient across the membrane. The chain is A-type ATP synthase subunit F from Archaeoglobus fulgidus (strain ATCC 49558 / DSM 4304 / JCM 9628 / NBRC 100126 / VC-16).